A 453-amino-acid polypeptide reads, in one-letter code: Bis(5'-adenosyl)-triphosphatase ENPP4 (453 aa).

Residues 1 to 15 (MKLLVILLFSGLITG) form the signal peptide. At 16-407 (FRSDSSSSLP…DQWCINLPEA (392 aa)) the chain is on the extracellular side. D34 and T70 together coordinate Zn(2+). Catalysis depends on T70, which acts as the AMP-threonine intermediate. The substrate site is built by N91 and Y154. N-linked (GlcNAc...) asparagine glycans are attached at residues N155 and N166. Residues D189, H193, D237, and H238 each contribute to the Zn(2+) site. Residue D189 participates in substrate binding. A disulfide bridge links C254 with C287. N276 carries an N-linked (GlcNAc...) asparagine glycan. H336 provides a ligand contact to Zn(2+). The N-linked (GlcNAc...) asparagine glycan is linked to N386. An intrachain disulfide couples C394 to C401. Residues 408–428 (IAIVIGSLLVLTMLTCLIIIM) traverse the membrane as a helical segment. The Cytoplasmic segment spans residues 429–453 (QNRLSVPRPFSRLQLQEDDDDPLIG).

The protein belongs to the nucleotide pyrophosphatase/phosphodiesterase family. Zn(2+) serves as cofactor. In terms of tissue distribution, expressed on the surface of vascular endothelia.

Its subcellular location is the cell membrane. The catalysed reaction is P(1),P(3)-bis(5'-adenosyl) triphosphate + H2O = AMP + ADP + 2 H(+). Functionally, hydrolyzes extracellular Ap3A into AMP and ADP, and Ap4A into AMP and ATP. Ap3A and Ap4A are diadenosine polyphosphates thought to induce proliferation of vascular smooth muscle cells. Acts as a procoagulant, mediating platelet aggregation at the site of nascent thrombus via release of ADP from Ap3A and activation of ADP receptors. The polypeptide is Bis(5'-adenosyl)-triphosphatase ENPP4 (ENPP4) (Homo sapiens (Human)).